We begin with the raw amino-acid sequence, 435 residues long: Methylenetetrahydrofolate--tRNA-(uracil-5-)-methyltransferase TrmFO (435 aa).

FAD is bound at residue 7–12 (GAGLAG).

Belongs to the MnmG family. TrmFO subfamily. FAD is required as a cofactor.

It localises to the cytoplasm. The catalysed reaction is uridine(54) in tRNA + (6R)-5,10-methylene-5,6,7,8-tetrahydrofolate + NADH + H(+) = 5-methyluridine(54) in tRNA + (6S)-5,6,7,8-tetrahydrofolate + NAD(+). The enzyme catalyses uridine(54) in tRNA + (6R)-5,10-methylene-5,6,7,8-tetrahydrofolate + NADPH + H(+) = 5-methyluridine(54) in tRNA + (6S)-5,6,7,8-tetrahydrofolate + NADP(+). Catalyzes the folate-dependent formation of 5-methyl-uridine at position 54 (M-5-U54) in all tRNAs. The polypeptide is Methylenetetrahydrofolate--tRNA-(uracil-5-)-methyltransferase TrmFO (Thermotoga maritima (strain ATCC 43589 / DSM 3109 / JCM 10099 / NBRC 100826 / MSB8)).